A 170-amino-acid chain; its full sequence is Transmembrane protein 217B (170 aa).

The signal sequence occupies residues 1–21; the sequence is MNVRMFSLMVGIFSVLNTTQF. The Lumenal portion of the chain corresponds to 22 to 58; it reads FIFDLNQKTHICYEAKFSIYVDSKSELVTWTLFHRAN. The chain crosses the membrane as a helical span at residues 59 to 79; sequence ISTGLSLTTIIIGCFLFYCIH. The Cytoplasmic segment spans residues 80–85; it reads KNIYMG. Residues 86 to 106 form a helical membrane-spanning segment; sequence LLIYAMWIITYELINFSIVLL. Residues 107–120 are Lumenal-facing; it reads LNGIIKDHFKTLSY. The helical transmembrane segment at 121–141 threads the bilayer; it reads LHWIFQISHMLLHFFCLPFIV. The Cytoplasmic portion of the chain corresponds to 142-170; it reads KHAYNLYKESQTVGRKRRHRLCSTIAVNS.

It localises to the membrane. The polypeptide is Transmembrane protein 217B (Homo sapiens (Human)).